Consider the following 352-residue polypeptide: MSKQPSLSYKDAGVDIDAGEALVERIKGVAKRTARPEVMGGLGGFGALCEIPAGYKQPVLVSGTDGVGTKLRLALNLNKHDSIGQDLVAMCVNDLVVCGAEPLFFLDYYATGKLNVDVAATVVTGIGAGCELAGCSLVGGETAEMPGMYEGEDYDLAGFCVGVVEKADIIDGSKVVTGDALIALPSSGPHSNGYSLIRKILEVSGTDIDNTQLDGKPLADLLMAPTRIYVKPLLQLIKQTGAVKAMAHITGGGLLDNIPRVLPKNAQAVVDVASWQRPVVFDFLQEKGNVDEHEMHRVLNCGVGMVICVAQDQVENALNVLRAEGEQPWVIGRIDVAAEGAAQVELHNLKAH.

Belongs to the AIR synthase family.

The protein resides in the cytoplasm. It carries out the reaction 2-formamido-N(1)-(5-O-phospho-beta-D-ribosyl)acetamidine + ATP = 5-amino-1-(5-phospho-beta-D-ribosyl)imidazole + ADP + phosphate + H(+). The protein operates within purine metabolism; IMP biosynthesis via de novo pathway; 5-amino-1-(5-phospho-D-ribosyl)imidazole from N(2)-formyl-N(1)-(5-phospho-D-ribosyl)glycinamide: step 2/2. The polypeptide is Phosphoribosylformylglycinamidine cyclo-ligase (Pseudomonas entomophila (strain L48)).